The following is a 303-amino-acid chain: Ribosomal protein L11 methyltransferase (303 aa).

S-adenosyl-L-methionine is bound by residues Thr-144, Gly-165, Asp-187, and Asn-235.

The protein belongs to the methyltransferase superfamily. PrmA family.

The protein resides in the cytoplasm. The enzyme catalyses L-lysyl-[protein] + 3 S-adenosyl-L-methionine = N(6),N(6),N(6)-trimethyl-L-lysyl-[protein] + 3 S-adenosyl-L-homocysteine + 3 H(+). Functionally, methylates ribosomal protein L11. The chain is Ribosomal protein L11 methyltransferase from Prochlorococcus marinus (strain AS9601).